Reading from the N-terminus, the 398-residue chain is Elongation factor Tu (398 aa).

A tr-type G domain is found at 10-207 (KPHVNIGTIG…TVDEYIPEPE (198 aa)). A G1 region spans residues 19-26 (GHVDHGKT). Position 19 to 26 (19 to 26 (GHVDHGKT)) interacts with GTP. Position 26 (T26) interacts with Mg(2+). The tract at residues 63–67 (GITIN) is G2. Residues 84–87 (DAPG) form a G3 region. GTP contacts are provided by residues 84 to 88 (DAPGH) and 139 to 142 (NKVD). The G4 stretch occupies residues 139–142 (NKVD). A G5 region spans residues 177 to 179 (SAL).

Belongs to the TRAFAC class translation factor GTPase superfamily. Classic translation factor GTPase family. EF-Tu/EF-1A subfamily. As to quaternary structure, monomer.

It is found in the cytoplasm. It carries out the reaction GTP + H2O = GDP + phosphate + H(+). Functionally, GTP hydrolase that promotes the GTP-dependent binding of aminoacyl-tRNA to the A-site of ribosomes during protein biosynthesis. The protein is Elongation factor Tu of Streptococcus agalactiae serotype Ia (strain ATCC 27591 / A909 / CDC SS700).